We begin with the raw amino-acid sequence, 193 residues long: Putative 3-methyladenine DNA glycosylase (193 aa).

It belongs to the DNA glycosylase MPG family.

The polypeptide is Putative 3-methyladenine DNA glycosylase (Francisella tularensis subsp. tularensis (strain FSC 198)).